A 319-amino-acid chain; its full sequence is MDKVKHSKIIILGSGPAGYTAAIYAARANLDPFLITGTNKGGQLMNTNEIENWPGDYNKISGSELMNRMYKHAIELKTKVICDTVISVNFKKNPFFLIGENNKYTADSVIIATGANPRYLGLQSESLFKGKGVSTCAVCDGFFYKNKEVAVVGGGNTAIEETLYLSNFVKKVHLIHRGINFRAEKILLDRLEKKIKSQKIIIYLNSIVKNILGNSSGVTALLIEQKNSKEKTESKIQVSGLFVAIGYTPNTNIFVNKLKMKDGYIQVTRQEHGNYTQTSIPGIFAAGDVIDHVYRQAITSSASGCMAALDSERYINSLV.

36–43 (TGTNKGGQ) is a binding site for FAD. Cysteine 136 and cysteine 139 form a disulfide bridge. 288 to 297 (DVIDHVYRQA) is a binding site for FAD.

Belongs to the class-II pyridine nucleotide-disulfide oxidoreductase family. Homodimer. FAD is required as a cofactor.

It localises to the cytoplasm. The catalysed reaction is [thioredoxin]-dithiol + NADP(+) = [thioredoxin]-disulfide + NADPH + H(+). The chain is Thioredoxin reductase (trxB) from Buchnera aphidicola subsp. Acyrthosiphon pisum (strain APS) (Acyrthosiphon pisum symbiotic bacterium).